The following is a 505-amino-acid chain: GMP synthase [glutamine-hydrolyzing] (505 aa).

A Glutamine amidotransferase type-1 domain is found at 3 to 190 (KVLVVNFGGQ…LRKIARISDV (188 aa)). C80 serves as the catalytic Nucleophile. Catalysis depends on residues H164 and E166. In terms of domain architecture, GMPS ATP-PPase spans 191–380 (WRPEDQITRI…LGLPEDVVYR (190 aa)). Residue 218–224 (SGGVDST) participates in ATP binding.

It carries out the reaction XMP + L-glutamine + ATP + H2O = GMP + L-glutamate + AMP + diphosphate + 2 H(+). It functions in the pathway purine metabolism; GMP biosynthesis; GMP from XMP (L-Gln route): step 1/1. In terms of biological role, catalyzes the synthesis of GMP from XMP. This is GMP synthase [glutamine-hydrolyzing] from Pyrobaculum aerophilum (strain ATCC 51768 / DSM 7523 / JCM 9630 / CIP 104966 / NBRC 100827 / IM2).